A 96-amino-acid polypeptide reads, in one-letter code: Integration host factor subunit beta (96 aa).

It belongs to the bacterial histone-like protein family. In terms of assembly, heterodimer of an alpha and a beta chain.

In terms of biological role, this protein is one of the two subunits of integration host factor, a specific DNA-binding protein that functions in genetic recombination as well as in transcriptional and translational control. The polypeptide is Integration host factor subunit beta (Caulobacter vibrioides (strain ATCC 19089 / CIP 103742 / CB 15) (Caulobacter crescentus)).